Here is a 395-residue protein sequence, read N- to C-terminus: E3 ubiquitin-protein ligase RDUF1 (395 aa).

Disordered stretches follow at residues 1–22 (MMPNSRSATITPTTESTTTTTT) and 107–130 (PVIVLHGGGGGGAGERVENEEGDG). Over residues 9–22 (TITPTTESTTTTTT) the composition is skewed to low complexity. Over residues 121 to 130 (ERVENEEGDG) the composition is skewed to basic and acidic residues. The RING-type; atypical zinc-finger motif lies at 215–256 (CAVCTEVFEAGIEGREMPCKHIFHGDCIVPWLSIRNSCPVCR).

Expressed in root tips, leaf tips, junction of carpels and pedicels, stigma, anthers, pollen, vasculature of sepals and petals, immature seeds and embryos.

It is found in the cytoplasm. The protein localises to the cytosol. Its subcellular location is the nucleus. The enzyme catalyses S-ubiquitinyl-[E2 ubiquitin-conjugating enzyme]-L-cysteine + [acceptor protein]-L-lysine = [E2 ubiquitin-conjugating enzyme]-L-cysteine + N(6)-ubiquitinyl-[acceptor protein]-L-lysine.. It functions in the pathway protein modification; protein ubiquitination. E3 ubiquitin-protein ligase involved in the positive regulation of abscisic acid-dependent drought stress responses. Involved in the positive regulation of responses to salt and osmotic stresses during seed germination and early seedling development. Possesses E3 ubiquitin ligase activity in vitro. The sequence is that of E3 ubiquitin-protein ligase RDUF1 from Arabidopsis thaliana (Mouse-ear cress).